We begin with the raw amino-acid sequence, 166 residues long: Antibacterial peptide PMAP-36 (166 aa).

A signal peptide spans 1 to 29 (METQRASLCLGRWSLWLLLLGLVVPSASA). Residues 30–129 (QALSYREAVL…LDINCDEIQS (100 aa)) constitute a propeptide that is removed on maturation. 2 cysteine pairs are disulfide-bonded: C85–C96 and C107–C124.

The protein belongs to the cathelicidin family.

The protein resides in the secreted. Its function is as follows. Exerts antimicrobial activity against both Gram-positive and negative bacteria. Its activity appears to be mediated by its ability to damage bacterial membranes. The protein is Antibacterial peptide PMAP-36 (PMAP36) of Sus scrofa (Pig).